Here is a 211-residue protein sequence, read N- to C-terminus: Rho-related GTP-binding protein RhoF (211 aa).

M1 is subject to N-acetylmethionine. 26 to 33 (GDGGCGKT) contacts GTP. An Effector region motif is present at residues 48-56 (YAPSVFEKY). Residues 73–77 (DTAGQ) and 131–134 (CKTD) each bind GTP. C208 is modified (cysteine methyl ester). C208 carries the S-geranylgeranyl cysteine lipid modification. The propeptide at 209–211 (LLL) is removed in mature form.

Belongs to the small GTPase superfamily. Rho family.

Its subcellular location is the cell membrane. It is found in the cytoplasm. It localises to the cytoskeleton. Functionally, plasma membrane-associated small GTPase which cycles between an active GTP-bound and an inactive GDP-bound state. Causes the formation of thin, actin-rich surface projections called filopodia. Functions cooperatively with CDC42 and Rac to generate additional structures, increasing the diversity of actin-based morphology. In Mus musculus (Mouse), this protein is Rho-related GTP-binding protein RhoF (Rhof).